The primary structure comprises 381 residues: Chaperone protein DnaJ (381 aa).

The 66-residue stretch at 5-70 (DFYEVLGVGR…QKKAAYDQYG (66 aa)) folds into the J domain. A CR-type zinc finger spans residues 136-214 (GCSKEIEVPT…CHGQGRKQKT (79 aa)). Positions 149, 152, 166, 169, 188, 191, 202, and 205 each coordinate Zn(2+). 4 CXXCXGXG motif repeats span residues 149 to 156 (CDACDGSG), 166 to 173 (CGTCHGHG), 188 to 195 (CPTCHGKG), and 202 to 209 (CNVCHGQG).

Belongs to the DnaJ family. Homodimer. It depends on Zn(2+) as a cofactor.

It localises to the cytoplasm. Participates actively in the response to hyperosmotic and heat shock by preventing the aggregation of stress-denatured proteins and by disaggregating proteins, also in an autonomous, DnaK-independent fashion. Unfolded proteins bind initially to DnaJ; upon interaction with the DnaJ-bound protein, DnaK hydrolyzes its bound ATP, resulting in the formation of a stable complex. GrpE releases ADP from DnaK; ATP binding to DnaK triggers the release of the substrate protein, thus completing the reaction cycle. Several rounds of ATP-dependent interactions between DnaJ, DnaK and GrpE are required for fully efficient folding. Also involved, together with DnaK and GrpE, in the DNA replication of plasmids through activation of initiation proteins. The polypeptide is Chaperone protein DnaJ (Vibrio cholerae serotype O1 (strain ATCC 39541 / Classical Ogawa 395 / O395)).